The chain runs to 957 residues: Protein translocase subunit SecA (957 aa).

Residues Gln86, 104-108, and Asp494 contribute to the ATP site; that span reads GEGKT. The segment covering 929–947 has biased composition (low complexity); it reads SRPAPAPTAAASPDPSSAS. The disordered stretch occupies residues 929 to 957; the sequence is SRPAPAPTAAASPDPSSASGVVEADFTEE.

Belongs to the SecA family. In terms of assembly, monomer and homodimer. Part of the essential Sec protein translocation apparatus which comprises SecA, SecYEG and auxiliary proteins SecDF. Other proteins may also be involved.

The protein localises to the cell inner membrane. Its subcellular location is the cellular thylakoid membrane. It is found in the cytoplasm. The catalysed reaction is ATP + H2O + cellular proteinSide 1 = ADP + phosphate + cellular proteinSide 2.. Functionally, part of the Sec protein translocase complex. Interacts with the SecYEG preprotein conducting channel. Has a central role in coupling the hydrolysis of ATP to the transfer of proteins into and across the cell membrane, serving as an ATP-driven molecular motor driving the stepwise translocation of polypeptide chains across the membrane. Its function is as follows. Probably participates in protein translocation into and across both the cytoplasmic and thylakoid membranes in cyanobacterial cells. The chain is Protein translocase subunit SecA from Synechococcus sp. (strain JA-2-3B'a(2-13)) (Cyanobacteria bacterium Yellowstone B-Prime).